The sequence spans 355 residues: MNKKVVIGMSGGVDSSVAAYLLKEQGYDVIGVTMKLTPDDAFYTEQEGGCCSLSAVEDARRVAYRIGIPFYVVNFTDIFKEKVIDYFTEEYLNGKTPNPCIACNKYIKFDALLKKAESLGADYIATGHYCRIVEENGRYVIRKSEDEKKDQTYVMYNMTQDQLKHTLMPCGDYKKDRIREIAREIGLNVFDKKDSEEICFIPDNDHGGFIKRECPKAVKTGNFVDKEGKVLGKHKGIIYYTIGQRKGLGIATGKRVFVTNIDAMKNQVVIGEEEEIFENELISFKNNFIPFDKLTEPMEVDAKIRYNAKASKATIYPVDDENVKVKFEKPQRAITKGQSVVFYDGDLLVGGGIIK.

ATP is bound by residues Gly-8–Ser-15 and Met-34. The active-site Nucleophile is the Cys-103. Cys-103 and Cys-199 are oxidised to a cystine. Gly-127 is a binding site for ATP. The segment at Lys-149 to Gln-151 is interaction with tRNA. Residue Cys-199 is the Cysteine persulfide intermediate of the active site. The interval Arg-305–Tyr-306 is interaction with tRNA.

The protein belongs to the MnmA/TRMU family.

The protein localises to the cytoplasm. It carries out the reaction S-sulfanyl-L-cysteinyl-[protein] + uridine(34) in tRNA + AH2 + ATP = 2-thiouridine(34) in tRNA + L-cysteinyl-[protein] + A + AMP + diphosphate + H(+). Its function is as follows. Catalyzes the 2-thiolation of uridine at the wobble position (U34) of tRNA, leading to the formation of s(2)U34. The chain is tRNA-specific 2-thiouridylase MnmA from Clostridium acetobutylicum (strain ATCC 824 / DSM 792 / JCM 1419 / IAM 19013 / LMG 5710 / NBRC 13948 / NRRL B-527 / VKM B-1787 / 2291 / W).